A 193-amino-acid polypeptide reads, in one-letter code: uncharacterized protein (193 aa).

The tract at residues 1-84 (MTSKCSKWHE…RRSNQRIQLY (84 aa)) is disordered. The segment covering 43–78 (SSPRRSSPRRSPRRSSPRRSSPRRSSPRRSSPRRSN) has biased composition (basic residues).

This sequence belongs to the IIV-6 378R family.

This is an uncharacterized protein from Invertebrate iridescent virus 6 (IIV-6).